The following is a 429-amino-acid chain: Adenylosuccinate synthetase (429 aa).

GTP-binding positions include Gly-12 to Lys-18 and Gly-40 to Thr-42. Residue Asp-13 is the Proton acceptor of the active site. The Mg(2+) site is built by Asp-13 and Gly-40. Residues Asp-13–Lys-16, Asn-38–His-41, Thr-129, Arg-143, Gln-224, Thr-239, and Arg-303 each bind IMP. Residue His-41 is the Proton donor of the active site. Val-299–Arg-305 contacts substrate. Residues Arg-305, Lys-331–Asp-333, and Gly-413–Gly-415 contribute to the GTP site.

This sequence belongs to the adenylosuccinate synthetase family. As to quaternary structure, homodimer. The cofactor is Mg(2+).

The protein resides in the cytoplasm. The catalysed reaction is IMP + L-aspartate + GTP = N(6)-(1,2-dicarboxyethyl)-AMP + GDP + phosphate + 2 H(+). It functions in the pathway purine metabolism; AMP biosynthesis via de novo pathway; AMP from IMP: step 1/2. Functionally, plays an important role in the de novo pathway of purine nucleotide biosynthesis. Catalyzes the first committed step in the biosynthesis of AMP from IMP. This chain is Adenylosuccinate synthetase, found in Rhodococcus erythropolis (strain PR4 / NBRC 100887).